We begin with the raw amino-acid sequence, 1181 residues long: 1-phosphatidylinositol 4,5-bisphosphate phosphodiesterase beta-2 (1181 aa).

The PI-PLC X-box domain occupies 312–463; sequence QDMTQPLNHY…LRGKILIKNK (152 aa). His327 is an active-site residue. Ca(2+)-binding residues include Asn328, Glu357, and Asp359. The active site involves His374. Glu408 is a binding site for Ca(2+). The segment at 465–534 is disordered; it reads NQFSGPASPS…EEIKKMQSDE (70 aa). The span at 503–525 shows a compositional bias: acidic residues; that stretch reads TEVEEEEVVEEEEEEESGNLDEE. The 117-residue stretch at 547–663 folds into the PI-PLC Y-box domain; that stretch reads MSSLVNYIQP…GYLLKHEFMR (117 aa). One can recognise a C2 domain in the interval 666-791; it reads DKQFNPFSVD…CLRSESNMAL (126 aa). The tract at residues 847–890 is disordered; sequence SGTPVASQSNGAPVSAGNGSTAPGTKATGEEATKEVTEPQTASL. Residues 850–869 are compositionally biased toward polar residues; it reads PVASQSNGAPVSAGNGSTAP. Over residues 874–883 the composition is skewed to basic and acidic residues; it reads TGEEATKEVT. Residues 893-940 are a coiled coil; the sequence is LRELKGVVKLQRRHEKELRELERRGARRWEELLQRGAAQLAELQTQAA. The residue at position 950 (Ser950) is a Phosphoserine. Coiled coils occupy residues 974–1026 and 1075–1141; these read PRVQ…AELK and HIQE…VRAY. Positions 1149 to 1181 are disordered; sequence EAEDKPERSCEASEESCPQEPLVSKADTQESRL. The span at 1150-1159 shows a compositional bias: basic and acidic residues; that stretch reads AEDKPERSCE.

Interacts with RAC1. Forms a complex composed of at least WDR26, a G-beta:gamma unit, and PLCB2. Ca(2+) is required as a cofactor.

It catalyses the reaction a 1,2-diacyl-sn-glycero-3-phospho-(1D-myo-inositol-4,5-bisphosphate) + H2O = 1D-myo-inositol 1,4,5-trisphosphate + a 1,2-diacyl-sn-glycerol + H(+). The enzyme catalyses a 1,2-diacyl-sn-glycero-3-phospho-(1D-myo-inositol) + H2O = 1D-myo-inositol 1-phosphate + a 1,2-diacyl-sn-glycerol + H(+). Its function is as follows. The production of the second messenger molecules diacylglycerol (DAG) and inositol 1,4,5-trisphosphate (IP3) is mediated by activated phosphatidylinositol-specific phospholipase C enzymes. In neutrophils, participates in a phospholipase C-activating N-formyl peptide-activated GPCR (G protein-coupled receptor) signaling pathway by promoting RASGRP4 activation by DAG, to promote neutrophil functional responses. The chain is 1-phosphatidylinositol 4,5-bisphosphate phosphodiesterase beta-2 from Mus musculus (Mouse).